A 735-amino-acid chain; its full sequence is Transmembrane channel-like protein 7 (735 aa).

Topologically, residues 1 to 164 are extracellular; the sequence is MSEFGAGAEL…QSYFSFLRFL (164 aa). Residues 165–185 traverse the membrane as a helical segment; that stretch reads VLLNFLMFILMFSFVTLPAVI. Over 186–233 the chain is Cytoplasmic; it reads SNYGIFNSSSTKISPNNTEPYCTVYTPSGNKGLVYFYTYLKDLLTGTG. Residues 234 to 254 form a helical membrane-spanning segment; that stretch reads FLEVTVLFYGYYTIDAAWFSV. At 255–258 the chain is on the extracellular side; sequence LRYN. Residues 259-279 form a helical membrane-spanning segment; sequence LPLAYLLTTFAYLALSFVWII. The Cytoplasmic segment spans residues 280-355; it reads KRSVERFRQH…TMKEKLQIYS (76 aa). The helical transmembrane segment at 356 to 376 threads the bilayer; it reads LRIFINIIVIAVLSGCFYSIY. Topologically, residues 377 to 403 are extracellular; the sequence is RATVFSQENSSVSIRRNVMIANLLVQY. Residue Asn385 is glycosylated (N-linked (GlcNAc...) asparagine). The chain crosses the membrane as a helical span at residues 404 to 424; that stretch reads LPSIVITSANFIAPQIFSFLI. Topologically, residues 425-436 are cytoplasmic; the sequence is RFEDYSAAFEIR. Residues 437 to 457 traverse the membrane as a helical segment; that stretch reads LTLIRCVFVRLANVGVLLFSL. At 458-488 the chain is on the extracellular side; sequence WSQIHCDNDQCKACGYDYELYPCWESAVGQE. A helical transmembrane segment spans residues 489-509; sequence MYKLLIFDFMIIIAMTLFVDF. Residues 510–548 lie on the Cytoplasmic side of the membrane; sequence PRKLLVTYCSWKLVQWWGLQEFGISDNVLEIIYGQTICW. The chain crosses the membrane as a helical span at residues 549–569; sequence IGTFFSPLLPAIATIKYFIIF. At 570–594 the chain is on the extracellular side; that stretch reads YIKKISLIHTRKPASRPIRASSSNF. Residues 595–615 form a helical membrane-spanning segment; the sequence is FFLAVLLIGLILAFVPLGVSI. The Cytoplasmic portion of the chain corresponds to 616–634; that stretch reads ALISSSKACGPFRNFNTSW. A helical membrane pass occupies residues 635–655; it reads AIVPYTILEFPIGLQKFLYGI. At 656–658 the chain is on the extracellular side; that stretch reads ASE. A helical membrane pass occupies residues 659-679; the sequence is AFAVPFFVIACLFMFYFIALA. The Cytoplasmic portion of the chain corresponds to 680-735; sequence GAHKRVVEQLREQLVTESRDKLFLLEKLSEAQKNSGKPQKARKLTSSWLLEPLDKG. The disordered stretch occupies residues 710–735; sequence AQKNSGKPQKARKLTSSWLLEPLDKG.

The protein belongs to the TMC family.

It is found in the membrane. In terms of biological role, probable component of an ion channel. This chain is Transmembrane channel-like protein 7 (Tmc7), found in Gallus gallus (Chicken).